We begin with the raw amino-acid sequence, 117 residues long: Large ribosomal subunit protein uL18 (117 aa).

The protein belongs to the universal ribosomal protein uL18 family. Part of the 50S ribosomal subunit; part of the 5S rRNA/L5/L18/L25 subcomplex. Contacts the 5S and 23S rRNAs.

In terms of biological role, this is one of the proteins that bind and probably mediate the attachment of the 5S RNA into the large ribosomal subunit, where it forms part of the central protuberance. This is Large ribosomal subunit protein uL18 from Nitrosococcus oceani (strain ATCC 19707 / BCRC 17464 / JCM 30415 / NCIMB 11848 / C-107).